The primary structure comprises 279 residues: Bifunctional protein FolD (279 aa).

Residues 165–167, Ser-190, and Ile-231 contribute to the NADP(+) site; that span reads GRS.

The protein belongs to the tetrahydrofolate dehydrogenase/cyclohydrolase family. As to quaternary structure, homodimer.

The catalysed reaction is (6R)-5,10-methylene-5,6,7,8-tetrahydrofolate + NADP(+) = (6R)-5,10-methenyltetrahydrofolate + NADPH. It carries out the reaction (6R)-5,10-methenyltetrahydrofolate + H2O = (6R)-10-formyltetrahydrofolate + H(+). Its pathway is one-carbon metabolism; tetrahydrofolate interconversion. Functionally, catalyzes the oxidation of 5,10-methylenetetrahydrofolate to 5,10-methenyltetrahydrofolate and then the hydrolysis of 5,10-methenyltetrahydrofolate to 10-formyltetrahydrofolate. This Halalkalibacterium halodurans (strain ATCC BAA-125 / DSM 18197 / FERM 7344 / JCM 9153 / C-125) (Bacillus halodurans) protein is Bifunctional protein FolD.